The primary structure comprises 978 residues: Glycine dehydrogenase (decarboxylating) (978 aa).

K726 carries the N6-(pyridoxal phosphate)lysine modification.

This sequence belongs to the GcvP family. The glycine cleavage system is composed of four proteins: P, T, L and H. It depends on pyridoxal 5'-phosphate as a cofactor.

It carries out the reaction N(6)-[(R)-lipoyl]-L-lysyl-[glycine-cleavage complex H protein] + glycine + H(+) = N(6)-[(R)-S(8)-aminomethyldihydrolipoyl]-L-lysyl-[glycine-cleavage complex H protein] + CO2. Its function is as follows. The glycine cleavage system catalyzes the degradation of glycine. The P protein binds the alpha-amino group of glycine through its pyridoxal phosphate cofactor; CO(2) is released and the remaining methylamine moiety is then transferred to the lipoamide cofactor of the H protein. The sequence is that of Glycine dehydrogenase (decarboxylating) from Paraburkholderia phytofirmans (strain DSM 17436 / LMG 22146 / PsJN) (Burkholderia phytofirmans).